Here is a 238-residue protein sequence, read N- to C-terminus: Ribonuclease PH (238 aa).

Residues Arg86 and 124-126 (GTR) contribute to the phosphate site.

Belongs to the RNase PH family. Homohexameric ring arranged as a trimer of dimers.

It catalyses the reaction tRNA(n+1) + phosphate = tRNA(n) + a ribonucleoside 5'-diphosphate. Phosphorolytic 3'-5' exoribonuclease that plays an important role in tRNA 3'-end maturation. Removes nucleotide residues following the 3'-CCA terminus of tRNAs; can also add nucleotides to the ends of RNA molecules by using nucleoside diphosphates as substrates, but this may not be physiologically important. Probably plays a role in initiation of 16S rRNA degradation (leading to ribosome degradation) during starvation. This is Ribonuclease PH from Rhizobium rhizogenes (strain K84 / ATCC BAA-868) (Agrobacterium radiobacter).